Consider the following 117-residue polypeptide: Immunoglobulin heavy variable 3-30-3 (117 aa).

The signal sequence occupies residues 1–19 (MEFGLSWVFLVALLRGVQC). The residue at position 20 (glutamine 20) is a Pyrrolidone carboxylic acid. Residues 20 to 44 (QVQLVESGGGVVQPGRSLRLSCAAS) form a framework-1 region. One can recognise an Ig-like domain in the interval 20 to 117 (QVQLVESGGG…EDTAVYYCAR (98 aa)). Residues cysteine 41 and cysteine 115 are joined by a disulfide bond. A complementarity-determining-1 region spans residues 45 to 52 (GFTFSSYA). The segment at 53–69 (MHWVRQAPGKGLEWVAV) is framework-2. The tract at residues 70–77 (ISYDGSNK) is complementarity-determining-2. The framework-3 stretch occupies residues 78 to 115 (YYADSVKGRFTISRDNSKNTLYLQMNSLRAEDTAVYYC). Residues 116–117 (AR) are complementarity-determining-3.

In terms of assembly, immunoglobulins are composed of two identical heavy chains and two identical light chains; disulfide-linked.

It localises to the secreted. The protein localises to the cell membrane. In terms of biological role, v region of the variable domain of immunoglobulin heavy chains that participates in the antigen recognition. Immunoglobulins, also known as antibodies, are membrane-bound or secreted glycoproteins produced by B lymphocytes. In the recognition phase of humoral immunity, the membrane-bound immunoglobulins serve as receptors which, upon binding of a specific antigen, trigger the clonal expansion and differentiation of B lymphocytes into immunoglobulins-secreting plasma cells. Secreted immunoglobulins mediate the effector phase of humoral immunity, which results in the elimination of bound antigens. The antigen binding site is formed by the variable domain of one heavy chain, together with that of its associated light chain. Thus, each immunoglobulin has two antigen binding sites with remarkable affinity for a particular antigen. The variable domains are assembled by a process called V-(D)-J rearrangement and can then be subjected to somatic hypermutations which, after exposure to antigen and selection, allow affinity maturation for a particular antigen. This is Immunoglobulin heavy variable 3-30-3 from Homo sapiens (Human).